Reading from the N-terminus, the 102-residue chain is Small ribosomal subunit protein eS24 (102 aa).

This sequence belongs to the eukaryotic ribosomal protein eS24 family.

This Halorubrum lacusprofundi (strain ATCC 49239 / DSM 5036 / JCM 8891 / ACAM 34) protein is Small ribosomal subunit protein eS24.